A 159-amino-acid polypeptide reads, in one-letter code: Transcriptional repressor NrdR (159 aa).

The segment at 3–34 is a zinc-finger region; that stretch reads CPTCQNTDSRVLESRSADTGKSVRRRRECLNC. Residues 49-139 form the ATP-cone domain; sequence ISVLKKDGSR…VYRKFNGVKD (91 aa).

It belongs to the NrdR family. Zn(2+) serves as cofactor.

In terms of biological role, negatively regulates transcription of bacterial ribonucleotide reductase nrd genes and operons by binding to NrdR-boxes. In Prochlorococcus marinus (strain MIT 9515), this protein is Transcriptional repressor NrdR.